Here is a 398-residue protein sequence, read N- to C-terminus: Glutamyl-tRNA reductase (398 aa).

Substrate is bound by residues 45 to 48 (TCNR), Ser88, 93 to 95 (EDQ), and Gln99. The active-site Nucleophile is the Cys46. 168–173 (GAGKMG) is a binding site for NADP(+).

The protein belongs to the glutamyl-tRNA reductase family. Homodimer.

The enzyme catalyses (S)-4-amino-5-oxopentanoate + tRNA(Glu) + NADP(+) = L-glutamyl-tRNA(Glu) + NADPH + H(+). Its pathway is porphyrin-containing compound metabolism; protoporphyrin-IX biosynthesis; 5-aminolevulinate from L-glutamyl-tRNA(Glu): step 1/2. Its function is as follows. Catalyzes the NADPH-dependent reduction of glutamyl-tRNA(Glu) to glutamate 1-semialdehyde (GSA). The polypeptide is Glutamyl-tRNA reductase (hemA) (Methanothermobacter marburgensis (strain ATCC BAA-927 / DSM 2133 / JCM 14651 / NBRC 100331 / OCM 82 / Marburg) (Methanobacterium thermoautotrophicum)).